Here is a 614-residue protein sequence, read N- to C-terminus: UvrABC system protein C (614 aa).

In terms of domain architecture, GIY-YIG spans Asn-26–Val-104. The UVR domain occupies Ser-215–Val-250.

It belongs to the UvrC family. As to quaternary structure, interacts with UvrB in an incision complex.

It is found in the cytoplasm. The UvrABC repair system catalyzes the recognition and processing of DNA lesions. UvrC both incises the 5' and 3' sides of the lesion. The N-terminal half is responsible for the 3' incision and the C-terminal half is responsible for the 5' incision. In Psychrobacter arcticus (strain DSM 17307 / VKM B-2377 / 273-4), this protein is UvrABC system protein C.